A 146-amino-acid chain; its full sequence is Ribosome-binding factor A (146 aa).

A disordered region spans residues 113–146; it reads IRDEREAQEPAQDPAQDSSQDASVEASDAPDKAE.

Belongs to the RbfA family. In terms of assembly, monomer. Binds 30S ribosomal subunits, but not 50S ribosomal subunits or 70S ribosomes.

Its subcellular location is the cytoplasm. In terms of biological role, one of several proteins that assist in the late maturation steps of the functional core of the 30S ribosomal subunit. Associates with free 30S ribosomal subunits (but not with 30S subunits that are part of 70S ribosomes or polysomes). Required for efficient processing of 16S rRNA. May interact with the 5'-terminal helix region of 16S rRNA. The polypeptide is Ribosome-binding factor A (Gemmatimonas aurantiaca (strain DSM 14586 / JCM 11422 / NBRC 100505 / T-27)).